The primary structure comprises 217 residues: Large ribosomal subunit protein uL1 (217 aa).

Belongs to the universal ribosomal protein uL1 family.

This Drosophila melanogaster (Fruit fly) protein is Large ribosomal subunit protein uL1 (RpL10Ab).